Reading from the N-terminus, the 270-residue chain is Imidazoleglycerol-phosphate dehydratase 1, chloroplastic (270 aa).

The N-terminal 62 residues, 1–62, are a transit peptide targeting the chloroplast; sequence MELSSASAIL…QSQLRQSISC (62 aa). An N-acetylserine modification is found at serine 63. Substrate contacts are provided by residues glutamate 84, 110-118, 136-140, arginine 162, and arginine 184; these read HMLDQLASH and HHTNE. Mn(2+)-binding residues include histidine 110, histidine 136, histidine 137, and glutamate 140. Mn(2+)-binding residues include histidine 208, histidine 232, histidine 233, and glutamate 236. Residues 232 to 240 and 262 to 264 each bind substrate; these read HHIIEATFK and SSK. The interval 250 to 270 is disordered; the sequence is TETDPRRGGTIPSSKGVLSRS.

The protein belongs to the imidazoleglycerol-phosphate dehydratase family. Mn(2+) serves as cofactor.

The protein resides in the plastid. Its subcellular location is the chloroplast. It carries out the reaction D-erythro-1-(imidazol-4-yl)glycerol 3-phosphate = 3-(imidazol-4-yl)-2-oxopropyl phosphate + H2O. Its pathway is amino-acid biosynthesis; L-histidine biosynthesis; L-histidine from 5-phospho-alpha-D-ribose 1-diphosphate: step 6/9. The chain is Imidazoleglycerol-phosphate dehydratase 1, chloroplastic from Arabidopsis thaliana (Mouse-ear cress).